A 940-amino-acid polypeptide reads, in one-letter code: Isoleucine--tRNA ligase (940 aa).

Residues 58 to 68 (PYANGSIHIGH) carry the 'HIGH' region motif. Glu-564 contacts L-isoleucyl-5'-AMP. Residues 605–609 (KMSKS) carry the 'KMSKS' region motif. Residue Lys-608 coordinates ATP. Cys-903, Cys-906, Cys-923, and Cys-926 together coordinate Zn(2+).

Belongs to the class-I aminoacyl-tRNA synthetase family. IleS type 1 subfamily. In terms of assembly, monomer. The cofactor is Zn(2+).

It is found in the cytoplasm. It carries out the reaction tRNA(Ile) + L-isoleucine + ATP = L-isoleucyl-tRNA(Ile) + AMP + diphosphate. Its function is as follows. Catalyzes the attachment of isoleucine to tRNA(Ile). As IleRS can inadvertently accommodate and process structurally similar amino acids such as valine, to avoid such errors it has two additional distinct tRNA(Ile)-dependent editing activities. One activity is designated as 'pretransfer' editing and involves the hydrolysis of activated Val-AMP. The other activity is designated 'posttransfer' editing and involves deacylation of mischarged Val-tRNA(Ile). The chain is Isoleucine--tRNA ligase from Shewanella oneidensis (strain ATCC 700550 / JCM 31522 / CIP 106686 / LMG 19005 / NCIMB 14063 / MR-1).